A 229-amino-acid chain; its full sequence is 7-cyano-7-deazaguanine synthase (229 aa).

15 to 25 (LSGGLDSTTCL) contributes to the ATP binding site. Zn(2+) contacts are provided by C192, C202, C205, and C208.

Belongs to the QueC family. It depends on Zn(2+) as a cofactor.

It carries out the reaction 7-carboxy-7-deazaguanine + NH4(+) + ATP = 7-cyano-7-deazaguanine + ADP + phosphate + H2O + H(+). Its pathway is purine metabolism; 7-cyano-7-deazaguanine biosynthesis. Functionally, catalyzes the ATP-dependent conversion of 7-carboxy-7-deazaguanine (CDG) to 7-cyano-7-deazaguanine (preQ(0)). This Acinetobacter baylyi (strain ATCC 33305 / BD413 / ADP1) protein is 7-cyano-7-deazaguanine synthase.